Here is a 238-residue protein sequence, read N- to C-terminus: MRPADRAAQQVRPLTLTRNYTKHAEGSVLVEFGDTKVLCTATVEEGVPRFLKGQGQGWITAEYGMLPRSTHSRNAREAAKGKQGGRTLEIQRLIARSLRAAVDLKKLGEFTITLDCDVLQADGGTRTASISGACVALADALNKLVASGKLKANPMKGLVAAVSVGIVKGEALCDLEYVEDSAAETDMNVVMMEDGRMIEVQGTAEGEPFSHEELLTLLALARGGIETIFQAQKAALEQ.

Phosphate-binding positions include arginine 86 and 124–126; that span reads GTR.

It belongs to the RNase PH family. In terms of assembly, homohexameric ring arranged as a trimer of dimers.

It carries out the reaction tRNA(n+1) + phosphate = tRNA(n) + a ribonucleoside 5'-diphosphate. Phosphorolytic 3'-5' exoribonuclease that plays an important role in tRNA 3'-end maturation. Removes nucleotide residues following the 3'-CCA terminus of tRNAs; can also add nucleotides to the ends of RNA molecules by using nucleoside diphosphates as substrates, but this may not be physiologically important. Probably plays a role in initiation of 16S rRNA degradation (leading to ribosome degradation) during starvation. The polypeptide is Ribonuclease PH (Yersinia enterocolitica serotype O:8 / biotype 1B (strain NCTC 13174 / 8081)).